The primary structure comprises 535 residues: WD repeat-containing protein 25 (535 aa).

Disordered regions lie at residues 1–108 (MASL…PRPS) and 141–160 (DQSTFESTAGNASSSQRKRG). The span at 141–155 (DQSTFESTAGNASSS) shows a compositional bias: polar residues. 7 WD repeats span residues 235-277 (GHRG…HCLQ), 281-320 (VHSEAVRAARWSPCGRRILSGGFDFALHLTDLETGTQVFS), 321-362 (GQSD…VVKG), 365-411 (ATIQ…KISN), 415-454 (HERYTCPSLALHPREPVFLAQTNGNYLALFSSVWPYRMSR), 460-501 (GHKV…RACT), and 504-535 (GHTQACLGTTYHPVLPSVLGTCSWGGDIKIWH).

This chain is WD repeat-containing protein 25 (Wdr25), found in Mus musculus (Mouse).